The primary structure comprises 1300 residues: Histone-lysine N-methyltransferase Suv4-20 (1300 aa).

Residues 1 to 136 (MVVGSNHTRR…GSGSVVSGLN (136 aa)) are disordered. Residues 14–62 (GSRFTNSSSSSSTSGGPTASASSTTSVTSSLATNSTSTSTAAALLSSMS) are compositionally biased toward low complexity. Residues 79–97 (QTNQQHHQVAHSQPHATHY) are compositionally biased toward polar residues. Over residues 116-128 (GSGGGSAGSGSGS) the composition is skewed to gly residues. The SET domain maps to 255-366 (EACYRYTLEE…VGEEITCFYG (112 aa)). Disordered stretches follow at residues 432–490 (SRAN…GKEA), 535–574 (QQHH…QQMA), 669–744 (HQSQ…SAGR), 756–856 (NNNI…TQGI), and 891–927 (ALGG…VEPL). Residues 435-451 (NSTNSTSNSNSNTNDST) are compositionally biased toward low complexity. Polar residues predominate over residues 452 to 462 (GPSETSSTNGL). Residues 536-557 (QHHHQHHFHHHHHHHHHHHNHG) show a composition bias toward basic residues. The span at 564-574 (AEATAAVQQMA) shows a compositional bias: low complexity. 3 stretches are compositionally biased toward basic and acidic residues: residues 677–688 (RRSERQKEKLTD), 698–707 (QQKKEQKQQD), and 722–735 (QPEK…EQQK). Residues 756 to 821 (NNNIATTTNS…SSIPSSTSSE (66 aa)) are compositionally biased toward low complexity. 2 stretches are compositionally biased toward polar residues: residues 822–834 (NQQQ…SCSP) and 911–923 (EPTT…TISN). Residues S831 and S833 each carry the phosphoserine modification. T930 is modified (phosphothreonine). Disordered stretches follow at residues 956-988 (SLSN…NLTG), 1006-1188 (EHGN…PNGK), 1212-1233 (SPGQ…GGSG), and 1263-1300 (QISQ…HGQK). A compositionally biased stretch (acidic residues) spans 1009 to 1029 (NDDDEDEEEDDEEPAAEEEEE). Over residues 1041–1055 (KKQRKKQRSRSRSSQ) the composition is skewed to basic residues. 2 stretches are compositionally biased toward low complexity: residues 1117 to 1145 (ASST…STSA) and 1161 to 1178 (SPSS…TSTT). The span at 1289 to 1300 (SHHHTNNHHGQK) shows a compositional bias: basic residues.

This sequence belongs to the class V-like SAM-binding methyltransferase superfamily. Histone-lysine methyltransferase family. Suvar4-20 subfamily.

It localises to the nucleus. The protein resides in the chromosome. It carries out the reaction L-lysyl(20)-[histone H4] + S-adenosyl-L-methionine = N(6)-methyl-L-lysyl(20)-[histone H4] + S-adenosyl-L-homocysteine + H(+). It catalyses the reaction N(6)-methyl-L-lysyl(20)-[histone H4] + S-adenosyl-L-methionine = N(6),N(6)-dimethyl-L-lysyl(20)-[histone H4] + S-adenosyl-L-homocysteine + H(+). The catalysed reaction is N(6),N(6)-dimethyl-L-lysyl(20)-[histone H4] + S-adenosyl-L-methionine = N(6),N(6),N(6)-trimethyl-L-lysyl(20)-[histone H4] + S-adenosyl-L-homocysteine + H(+). Its function is as follows. Histone methyltransferase that specifically trimethylates 'Lys-20' of histone H4. H4 'Lys-20' trimethylation represents a specific tag for epigenetic transcriptional repression. Mainly functions in pericentric heterochromatin regions, thereby playing a central role in the establishment of constitutive heterochromatin in these regions. Acts as a dominant suppressor of position-effect variegation. The protein is Histone-lysine N-methyltransferase Suv4-20 (Hmt4-20) of Drosophila melanogaster (Fruit fly).